The sequence spans 319 residues: Lipoyl synthase (319 aa).

Polar residues predominate over residues 1-12 (MVTIVDTLSNTP). The segment at 1–32 (MVTIVDTLSNTPLRPRHPEKANRPDSISPAKP) is disordered. [4Fe-4S] cluster contacts are provided by C61, C66, C72, C87, C91, C94, and S300. The Radical SAM core domain maps to 73–289 (WDKKHATFMI…ETVAYTKGFL (217 aa)).

It belongs to the radical SAM superfamily. Lipoyl synthase family. It depends on [4Fe-4S] cluster as a cofactor.

It localises to the cytoplasm. It carries out the reaction [[Fe-S] cluster scaffold protein carrying a second [4Fe-4S](2+) cluster] + N(6)-octanoyl-L-lysyl-[protein] + 2 oxidized [2Fe-2S]-[ferredoxin] + 2 S-adenosyl-L-methionine + 4 H(+) = [[Fe-S] cluster scaffold protein] + N(6)-[(R)-dihydrolipoyl]-L-lysyl-[protein] + 4 Fe(3+) + 2 hydrogen sulfide + 2 5'-deoxyadenosine + 2 L-methionine + 2 reduced [2Fe-2S]-[ferredoxin]. The protein operates within protein modification; protein lipoylation via endogenous pathway; protein N(6)-(lipoyl)lysine from octanoyl-[acyl-carrier-protein]: step 2/2. In terms of biological role, catalyzes the radical-mediated insertion of two sulfur atoms into the C-6 and C-8 positions of the octanoyl moiety bound to the lipoyl domains of lipoate-dependent enzymes, thereby converting the octanoylated domains into lipoylated derivatives. This chain is Lipoyl synthase, found in Bradyrhizobium sp. (strain BTAi1 / ATCC BAA-1182).